Reading from the N-terminus, the 82-residue chain is Acyl carrier protein (82 aa).

One can recognise a Carrier domain in the interval 3-81 (LSREKVLESI…DAVDFIIAAK (79 aa)). S41 carries the post-translational modification O-(pantetheine 4'-phosphoryl)serine.

The protein belongs to the acyl carrier protein (ACP) family. Post-translationally, 4'-phosphopantetheine is transferred from CoA to a specific serine of apo-ACP by AcpS. This modification is essential for activity because fatty acids are bound in thioester linkage to the sulfhydryl of the prosthetic group.

The protein resides in the cytoplasm. Its pathway is lipid metabolism; fatty acid biosynthesis. Its function is as follows. Carrier of the growing fatty acid chain in fatty acid biosynthesis. The protein is Acyl carrier protein of Tropheryma whipplei (strain Twist) (Whipple's bacillus).